Here is a 179-residue protein sequence, read N- to C-terminus: Adenine phosphoribosyltransferase (179 aa).

This sequence belongs to the purine/pyrimidine phosphoribosyltransferase family. Homodimer.

The protein resides in the cytoplasm. It carries out the reaction AMP + diphosphate = 5-phospho-alpha-D-ribose 1-diphosphate + adenine. It functions in the pathway purine metabolism; AMP biosynthesis via salvage pathway; AMP from adenine: step 1/1. Functionally, catalyzes a salvage reaction resulting in the formation of AMP, that is energically less costly than de novo synthesis. This Histophilus somni (strain 129Pt) (Haemophilus somnus) protein is Adenine phosphoribosyltransferase.